The following is a 328-amino-acid chain: Cell division protein ZipA (328 aa).

The Periplasmic segment spans residues 1 to 4; that stretch reads MDLN. A helical transmembrane segment spans residues 5-25; it reads TILIIVGIVALVALIVHGLWS. The Cytoplasmic portion of the chain corresponds to 26–328; that stretch reads NRREKSKYFD…NAEQAYLARV (303 aa). The interval 44-82 is disordered; sequence SLTSRSHTQEEMVQPNNISPNTYVENGHTPIPQPTTEKL. The span at 57–67 shows a compositional bias: polar residues; sequence QPNNISPNTYV.

Belongs to the ZipA family. In terms of assembly, interacts with FtsZ via their C-terminal domains.

It localises to the cell inner membrane. Essential cell division protein that stabilizes the FtsZ protofilaments by cross-linking them and that serves as a cytoplasmic membrane anchor for the Z ring. Also required for the recruitment to the septal ring of downstream cell division proteins. In Haemophilus influenzae (strain ATCC 51907 / DSM 11121 / KW20 / Rd), this protein is Cell division protein ZipA.